A 287-amino-acid chain; its full sequence is Nucleotide-binding protein HD_0584 (287 aa).

ATP is bound at residue 8 to 15 (GRSGSGKS). 56 to 59 (DIRN) provides a ligand contact to GTP.

This sequence belongs to the RapZ-like family.

In terms of biological role, displays ATPase and GTPase activities. This chain is Nucleotide-binding protein HD_0584, found in Haemophilus ducreyi (strain 35000HP / ATCC 700724).